The following is a 676-amino-acid chain: Methionine--tRNA ligase (676 aa).

Positions 15–25 (PYANGPIHLGH) match the 'HIGH' region motif. 4 residues coordinate Zn(2+): C146, C149, C159, and C162. The short motif at 332 to 336 (KMSKS) is the 'KMSKS' region element. K335 contacts ATP. The tRNA-binding domain maps to 575–676 (DFAKIDLRIA…EGAQPGMRVK (102 aa)).

It belongs to the class-I aminoacyl-tRNA synthetase family. MetG type 1 subfamily. Homodimer. It depends on Zn(2+) as a cofactor.

Its subcellular location is the cytoplasm. The enzyme catalyses tRNA(Met) + L-methionine + ATP = L-methionyl-tRNA(Met) + AMP + diphosphate. Is required not only for elongation of protein synthesis but also for the initiation of all mRNA translation through initiator tRNA(fMet) aminoacylation. The protein is Methionine--tRNA ligase of Shewanella sp. (strain MR-4).